The following is a 303-amino-acid chain: N-acetyl-D-glucosamine kinase (303 aa).

ATP is bound by residues Gly4–Lys11 and Gly133–Phe140. 4 residues coordinate Zn(2+): His157, Cys177, Cys179, and Cys184.

The protein belongs to the ROK (NagC/XylR) family. NagK subfamily.

It carries out the reaction N-acetyl-D-glucosamine + ATP = N-acetyl-D-glucosamine 6-phosphate + ADP + H(+). The protein operates within cell wall biogenesis; peptidoglycan recycling. In terms of biological role, catalyzes the phosphorylation of N-acetyl-D-glucosamine (GlcNAc) derived from cell-wall degradation, yielding GlcNAc-6-P. This is N-acetyl-D-glucosamine kinase from Escherichia coli O127:H6 (strain E2348/69 / EPEC).